A 390-amino-acid chain; its full sequence is Probable protein phosphatase 2C 30 (390 aa).

A compositionally biased stretch (polar residues) spans M1 to Q10. Disordered regions lie at residues M1–D20 and P40–T85. Residues F44–P61 are compositionally biased toward low complexity. One can recognise a PPM-type phosphatase domain in the interval Y128–L385. Mn(2+)-binding residues include D166, G167, D331, and D376.

This sequence belongs to the PP2C family. The cofactor is Mg(2+). Mn(2+) is required as a cofactor.

It carries out the reaction O-phospho-L-seryl-[protein] + H2O = L-seryl-[protein] + phosphate. The catalysed reaction is O-phospho-L-threonyl-[protein] + H2O = L-threonyl-[protein] + phosphate. The protein is Probable protein phosphatase 2C 30 (PP2C5) of Arabidopsis thaliana (Mouse-ear cress).